We begin with the raw amino-acid sequence, 555 residues long: Probable Xaa-Pro aminopeptidase BC1G_13431 (555 aa).

The Mn(2+) site is built by aspartate 303, aspartate 314, glutamate 458, and glutamate 499. The tract at residues 527 to 555 is disordered; sequence EGKEQEEEEEREANRKATESRKQKKTWFW. The segment covering 538-547 has biased composition (basic and acidic residues); that stretch reads EANRKATESR.

It belongs to the peptidase M24B family. The cofactor is Mn(2+).

The enzyme catalyses Release of any N-terminal amino acid, including proline, that is linked to proline, even from a dipeptide or tripeptide.. Functionally, catalyzes the removal of a penultimate prolyl residue from the N-termini of peptides. This Botryotinia fuckeliana (strain B05.10) (Noble rot fungus) protein is Probable Xaa-Pro aminopeptidase BC1G_13431.